Consider the following 169-residue polypeptide: Probable calcium-binding protein CML13 (169 aa).

Residues 1 to 26 (MSTVKGQTRRERPRGARPHGLTKQKR) are disordered. The segment covering 15-24 (GARPHGLTKQ) has biased composition (basic residues). 4 consecutive EF-hand domains span residues 24 to 59 (QKRQEIKEAFDLFDTDNSGTIDAKELNVAMRALGFE), 60 to 95 (MTEEQINQMIADVDKDGSGSIDYEEFEHMMTAKIGE), 97 to 132 (DSKEELTKAFSIIDQDKNGKISDVDIQRIAKELGEN), and 133 to 168 (FTYQEIQEMVQEADRNGDGEIDFDEFIRMMRRTGYG). Ca(2+) is bound by residues aspartate 37, aspartate 39, serine 41, threonine 43, glutamate 48, aspartate 73, aspartate 75, serine 77, serine 79, glutamate 84, aspartate 110, aspartate 112, asparagine 114, lysine 116, aspartate 121, aspartate 146, asparagine 148, aspartate 150, glutamate 152, and glutamate 157.

In terms of biological role, potential calcium sensor. The sequence is that of Probable calcium-binding protein CML13 (CML13) from Oryza sativa subsp. japonica (Rice).